The sequence spans 1899 residues: Protocadherin-15 (1899 aa).

The first 26 residues, 1–26 (MLQQFCLWKWLAVGIAVATILASSLA), serve as a signal peptide directing secretion. The Extracellular segment spans residues 27-1376 (QNDEDCKLAR…AQAVGYTEGA (1350 aa)). A disulfide bond links Cys-32 and Cys-120. 11 consecutive Cadherin domains span residues 38 to 147 (GPPA…SPQF), 148 to 265 (QQQR…GPMF), 278 to 395 (RPLT…KPYF), 396 to 509 (TKST…SPTF), 510 to 616 (SNIS…PPRF), 617 to 717 (PQLM…GPVF), 719 to 819 (MFLP…SPVF), 820 to 926 (TNAS…SPVF), 927 to 1035 (SKTL…IPRF), 1037 to 1144 (QDEY…APVF), and 1145 to 1259 (TKKM…PPTL). Residues 1377 to 1397 (LLALAVIIILCCMPAILIVMV) traverse the membrane as a helical segment. The Cytoplasmic portion of the chain corresponds to 1398–1899 (SYRQRQAECA…KRFPSQSTAL (502 aa)). 3 disordered regions span residues 1668–1687 (SPCL…VVEP), 1700–1721 (HDYP…SFRI), and 1734–1820 (TKGE…RREL). 2 stretches are compositionally biased toward pro residues: residues 1706-1717 (LSPPPTRKPTPP) and 1743-1773 (PDPP…PPTL). Residues 1774–1791 (PLASVPSSSSLPSTQHLS) are compositionally biased toward low complexity. Residues 1804-1814 (AVPPPAAVPEP) are compositionally biased toward pro residues.

In terms of tissue distribution, in the utricle, localizes to the distal region of the kinocilium and near the tips of the stereocilia.

It localises to the cell membrane. In terms of biological role, calcium-dependent cell-adhesion protein. Required for inner ear neuroepithelial cell elaboration and cochlear function. Probably involved in the maintenance of normal retinal function. The sequence is that of Protocadherin-15 (Pcdh15) from Gallus gallus (Chicken).